The following is a 476-amino-acid chain: 3-isopropylmalate dehydratase large subunit (476 aa).

[4Fe-4S] cluster-binding residues include cysteine 357, cysteine 417, and cysteine 420.

The protein belongs to the aconitase/IPM isomerase family. LeuC type 1 subfamily. Heterodimer of LeuC and LeuD. [4Fe-4S] cluster is required as a cofactor.

The enzyme catalyses (2R,3S)-3-isopropylmalate = (2S)-2-isopropylmalate. It participates in amino-acid biosynthesis; L-leucine biosynthesis; L-leucine from 3-methyl-2-oxobutanoate: step 2/4. Its function is as follows. Catalyzes the isomerization between 2-isopropylmalate and 3-isopropylmalate, via the formation of 2-isopropylmaleate. In Mycobacterium avium (strain 104), this protein is 3-isopropylmalate dehydratase large subunit.